The chain runs to 392 residues: MVVEPKILNNICITAHPLGCAKEVENHINYVKSQPKVKSNVKNALILGASGGYGLASRIAIAYGLGAKTMSVSFEKGATARRTATPGWYNNEAFSAFAKKDGIEDKNLILDAFLNASKEEVIKEAKTFFNGEKIDLLIYSLAAPVRMDESTGTLYRSSLKPIGKKYNGIGVDFLTEELLEVSIDPANEDDIKSTVKVMGGEDWKLWTDALLNADLLAENAINVAYSYIGPEMTKAVYREGTIGKAKDHLEATAHELDKEMQEKIKGHAYVSVNKAVVTRSSAVIPTVPLYIGILFKVMKNKGLHEGCIEQMYRLLNEKLYNGGEVPVDSDNRIRLDDWELREDVQKEVLDSWNKLTKDNLKEIADLALFRKDYMNMHGFDEEGIDYSQDVQI.

Residues 74–75 (FE), 111–112 (DA), and 141–142 (LA) contribute to the NAD(+) site. Residue Tyr227 participates in substrate binding. Tyr237 serves as the catalytic Proton donor. NAD(+)-binding positions include Lys246 and 276 to 278 (VVT).

It belongs to the TER reductase family. As to quaternary structure, monomer.

The enzyme catalyses a 2,3-saturated acyl-CoA + NAD(+) = a (2E)-enoyl-CoA + NADH + H(+). The protein operates within lipid metabolism; fatty acid biosynthesis. Its function is as follows. Involved in the fatty acid synthesis (FAS II). Catalyzes the reduction of a carbon-carbon double bond in an enoyl moiety that is covalently linked to a coenzyme A (CoA). This chain is Trans-2-enoyl-CoA reductase [NADH], found in Brachyspira hyodysenteriae (strain ATCC 49526 / WA1).